Consider the following 335-residue polypeptide: Phosphatidylinositol:ceramide inositolphosphotransferase (335 aa).

Residues 1 to 21 (MVLMGPHSALRLLPLKTQAIR) lie on the Cytoplasmic side of the membrane. The helical transmembrane segment at 22–42 (FVLLLLLSVLILAVALLVTNA) threads the bilayer. Over 43 to 72 (RMPDPKVVRPLPDIGFEVFPKVGWLEHLTD) the chain is Extracellular. A helical membrane pass occupies residues 73 to 93 (VCIFILNFLSLLVVFKLYLLH). Residues 94–98 (RQNEG) lie on the Cytoplasmic side of the membrane. The helical transmembrane segment at 99–119 (LDELQPFSCCPLIGKIIFGVW) threads the bilayer. Over 120–139 (DSGRQSGIEKRDAHLIAWIR) the chain is Extracellular. Residues 140-160 (YFTTYFIVLLFRAIVVVMTSY) traverse the membrane as a helical segment. At 161–179 (PATDNHCQNPMKITNPVKN) the chain is on the cytoplasmic side. A helical membrane pass occupies residues 180–200 (VIMTLVTFGSGSIHCGDLMFS). Residues 201 to 203 (GHT) lie on the Extracellular side of the membrane. Histidine 202 is a catalytic residue. The chain crosses the membrane as a helical span at residues 204 to 224 (VSITLSLLVQWIYGSMLHWVF). Residues 225–335 (RPASVLLVLL…GPACGNFGHW (111 aa)) lie on the Cytoplasmic side of the membrane. Residues histidine 245 and aspartate 249 contribute to the active site.

It belongs to the sphingomyelin synthase family.

The protein localises to the membrane. In terms of biological role, bidirectional lipid inositolphosphotransferase capable of converting phosphatidylinositol (PI) and ceramide to inositol-phosphorylceramide (IPC) and diacylglycerol (DAG) and vice versa. Direction is dependent on the relative concentrations of DAG and ceramide as phosphoinositol acceptors. Essential for viability of the pathogenic bloodstream stage of this human protozoan parasite and, consequently, can be considered as potential drug target. In Trypanosoma cruzi (strain CL Brener), this protein is Phosphatidylinositol:ceramide inositolphosphotransferase.